Reading from the N-terminus, the 585-residue chain is MAGUK p55 subfamily member 3 (585 aa).

2 consecutive L27 domains span residues 6 to 60 (EDSG…ERQS) and 61 to 118 (PTPV…FDPV). In terms of domain architecture, PDZ spans 137 to 212 (IVRLVKNKEP…LAQSQGSITL (76 aa)). Positions 226–296 (ESKVFMRALF…PSKGFQERRL (71 aa)) constitute an SH3 domain. At Ser307 the chain carries Phosphoserine. Residues 385-570 (PRLVVLIGSL…AYSQLKVVLE (186 aa)) form the Guanylate kinase-like domain.

This sequence belongs to the MAGUK family. In terms of assembly, interacts with HTR2C; this interaction stabilizes the receptor at the plasma membrane and prevents the desensitization of the HTR2C receptor-mediated calcium response. Interacts with HTR2A. Interacts with HTR4. Interacts (via PDZ domain) with CADM1 (via C-terminus)Interacts (via PDZ domain) with CADM1; this interaction connects CADM1 with DLG1. Interacts (via Guanylate kinase-like domain) with PALS1. Interacts with DLG1 (via N-terminus); this interaction connects CADM1 with DLG1 and links CADM1 with the regulatory subunit of phosphoinositide-3-kinase (PI3K) by forming a multiprotein complex and participates in cell spreading. In terms of tissue distribution, expressed in retina (at protein level) at the subapical region (SAR) adjacent to adherens junctions at the OLM, and at the OPL.

The protein resides in the cell membrane. The protein localises to the apical cell membrane. Its subcellular location is the cell junction. It is found in the adherens junction. Its function is as follows. Participates in cell spreading through the phosphoinositide-3-kinase (PI3K) pathway by connecting CADM1 to DLG1 and the regulatory subunit of phosphoinositide-3-kinase (PI3K). Stabilizes HTR2C at the plasma membrane and prevents its desensitization. May participates in the maintenance of adherens junctions. In Homo sapiens (Human), this protein is MAGUK p55 subfamily member 3.